We begin with the raw amino-acid sequence, 528 residues long: uncharacterized protein (528 aa).

6 to 35 contributes to the FAD binding site; the sequence is DYVVVGTGSAGAVVASRLSTDPATTVVALE. Catalysis depends on H468, which acts as the Proton acceptor.

Belongs to the GMC oxidoreductase family. FAD serves as cofactor.

This is an uncharacterized protein from Mycobacterium bovis (strain ATCC BAA-935 / AF2122/97).